A 200-amino-acid polypeptide reads, in one-letter code: Putative 3-methyladenine DNA glycosylase (200 aa).

It belongs to the DNA glycosylase MPG family.

This Bradyrhizobium diazoefficiens (strain JCM 10833 / BCRC 13528 / IAM 13628 / NBRC 14792 / USDA 110) protein is Putative 3-methyladenine DNA glycosylase.